The following is a 244-amino-acid chain: MNIDLNADVGEGCASDSELLTLVSSANIACGFHAGDAQTMLTCVREALKNGVAIGAHPSFPDRDNFGRTAMVLPPETVYAQTLYQIGALGAIVQAQGGVMRHVKPHGMLYNQAAKDPRLAQAIAKAVHDYDPSLILVGLAGSELIRAGERHRLVTRQEVFADRGYQADGSLVPRTQPGALIHDEEQALAQTLDMVQAGRVKSVTGVWTTVTAQTVCIHGDGEYALAFARRLRAAFNARNIHVIA.

This sequence belongs to the LamB/PxpA family. Forms a complex composed of PxpA, PxpB and PxpC.

It carries out the reaction 5-oxo-L-proline + ATP + 2 H2O = L-glutamate + ADP + phosphate + H(+). Catalyzes the cleavage of 5-oxoproline to form L-glutamate coupled to the hydrolysis of ATP to ADP and inorganic phosphate. In Salmonella newport (strain SL254), this protein is 5-oxoprolinase subunit A.